The following is a 361-amino-acid chain: sn-glycerol-3-phosphate import ATP-binding protein UgpC (361 aa).

The 232-residue stretch at 4–235 (LSFRNLKKTY…PASTFVAGFI (232 aa)) folds into the ABC transporter domain. 37-44 (GPSGCGKS) is a binding site for ATP.

It belongs to the ABC transporter superfamily. sn-glycerol-3-phosphate importer (TC 3.A.1.1.3) family. As to quaternary structure, the complex is composed of two ATP-binding proteins (UgpC), two transmembrane proteins (UgpA and UgpE) and a solute-binding protein (UgpB).

Its subcellular location is the cell inner membrane. The catalysed reaction is sn-glycerol 3-phosphate(out) + ATP + H2O = sn-glycerol 3-phosphate(in) + ADP + phosphate + H(+). Its function is as follows. Part of the ABC transporter complex UgpBAEC involved in sn-glycerol-3-phosphate (G3P) import. Responsible for energy coupling to the transport system. The polypeptide is sn-glycerol-3-phosphate import ATP-binding protein UgpC (Bordetella avium (strain 197N)).